The chain runs to 191 residues: Stress response regulator protein 1 (191 aa).

Residues 62-181 (SFLLVDDNEI…TNYILQKIEQ (120 aa)) enclose the Response regulatory domain. Aspartate 114 carries the 4-aspartylphosphate modification.

In terms of biological role, required for stress adaptation, morphogenesis and virulence. The sequence is that of Stress response regulator protein 1 (SRR1) from Clavispora lusitaniae (strain ATCC 42720) (Yeast).